Here is a 204-residue protein sequence, read N- to C-terminus: Ubiquitin-conjugating enzyme E2 T (204 aa).

The UBC core domain occupies 2 to 152 (QRASRLKKEL…AKQWTEAHAR (151 aa)). C86 functions as the Glycyl thioester intermediate in the catalytic mechanism. Glycyl lysine isopeptide (Lys-Gly) (interchain with G-Cter in ubiquitin) cross-links involve residues K91 and K181. The tract at residues 150-204 (HARQKQKADEEELGTSSEVGDSEESHSTQKRKARPLGGMEKKFSPDVQRVYPGPS) is disordered. Residues K190 and K191 each participate in a glycyl lysine isopeptide (Lys-Gly) (interchain with G-Cter in SUMO2) cross-link. S193 is subject to Phosphoserine.

It belongs to the ubiquitin-conjugating enzyme family. Interacts with FANCL and BRCA1. Post-translationally, auto-ubiquitinated. Effects of auto-monoubiquitination at Lys-91 and Lys-181 are unclear.

The protein resides in the nucleus. It carries out the reaction S-ubiquitinyl-[E1 ubiquitin-activating enzyme]-L-cysteine + [E2 ubiquitin-conjugating enzyme]-L-cysteine = [E1 ubiquitin-activating enzyme]-L-cysteine + S-ubiquitinyl-[E2 ubiquitin-conjugating enzyme]-L-cysteine.. It functions in the pathway protein modification; protein ubiquitination. Accepts ubiquitin from the E1 complex and catalyzes its covalent attachment to other proteins. Catalyzes monoubiquitination. Involved in mitomycin-C (MMC)-induced DNA repair: acts as a specific E2 ubiquitin-conjugating enzyme for the Fanconi anemia complex by associating with E3 ubiquitin-protein ligase FANCL and catalyzing monoubiquitination of FANCD2, a key step in the DNA damage pathway. Also mediates monoubiquitination of FANCL and FANCI. May contribute to ubiquitination and degradation of BRCA1. In vitro able to promote polyubiquitination using all 7 ubiquitin Lys residues, but may prefer 'Lys-11'-, 'Lys-27'-, 'Lys-48'- and 'Lys-63'-linked polyubiquitination. The sequence is that of Ubiquitin-conjugating enzyme E2 T (Ube2t) from Mus musculus (Mouse).